A 525-amino-acid chain; its full sequence is GMP synthase [glutamine-hydrolyzing] (525 aa).

Positions 9–207 constitute a Glutamine amidotransferase type-1 domain; the sequence is RILILDFGSQ…VRDICQCEAL (199 aa). Catalysis depends on C86, which acts as the Nucleophile. Residues H181 and E183 contribute to the active site. Residues 208–400 form the GMPS ATP-PPase domain; that stretch reads WTPAKIIDDA…LGLPYDMLYR (193 aa). 235–241 contributes to the ATP binding site; the sequence is SGGVDSS.

In terms of assembly, homodimer.

The catalysed reaction is XMP + L-glutamine + ATP + H2O = GMP + L-glutamate + AMP + diphosphate + 2 H(+). Its pathway is purine metabolism; GMP biosynthesis; GMP from XMP (L-Gln route): step 1/1. Functionally, catalyzes the synthesis of GMP from XMP. This is GMP synthase [glutamine-hydrolyzing] from Salmonella typhi.